Here is a 555-residue protein sequence, read N- to C-terminus: Urocanate hydratase (555 aa).

NAD(+)-binding positions include 52–53, Gln130, 176–178, Glu196, Arg201, 242–243, 263–267, 273–274, and Tyr322; these read GG, GMG, NA, QTSAH, and YL. Cys410 is a catalytic residue. NAD(+) is bound at residue Gly492.

This sequence belongs to the urocanase family. The cofactor is NAD(+).

It is found in the cytoplasm. It catalyses the reaction 4-imidazolone-5-propanoate = trans-urocanate + H2O. Its pathway is amino-acid degradation; L-histidine degradation into L-glutamate; N-formimidoyl-L-glutamate from L-histidine: step 2/3. Catalyzes the conversion of urocanate to 4-imidazolone-5-propionate. The polypeptide is Urocanate hydratase (Shewanella baltica (strain OS195)).